Consider the following 680-residue polypeptide: DNA-directed RNA polymerase subunit beta' (680 aa).

Residues cysteine 69, cysteine 71, cysteine 87, and cysteine 90 each coordinate Zn(2+). Aspartate 489, aspartate 491, and aspartate 493 together coordinate Mg(2+).

It belongs to the RNA polymerase beta' chain family. RpoC1 subfamily. In terms of assembly, in plastids the minimal PEP RNA polymerase catalytic core is composed of four subunits: alpha, beta, beta', and beta''. When a (nuclear-encoded) sigma factor is associated with the core the holoenzyme is formed, which can initiate transcription. It depends on Mg(2+) as a cofactor. The cofactor is Zn(2+).

It localises to the plastid. It is found in the chloroplast. It catalyses the reaction RNA(n) + a ribonucleoside 5'-triphosphate = RNA(n+1) + diphosphate. DNA-dependent RNA polymerase catalyzes the transcription of DNA into RNA using the four ribonucleoside triphosphates as substrates. The chain is DNA-directed RNA polymerase subunit beta' from Arabis hirsuta (Hairy rock-cress).